The following is a 323-amino-acid chain: Glutathione synthetase (323 aa).

Residues 133–317 (KMYALQFQSV…IGDQTIAALE (185 aa)) form the ATP-grasp domain. 159 to 215 (LDELRAAVLKPLGGKAGEGILFLDPGDRNFNSLVEISTQQGQLPVMVQQYLPEAKDG) lines the ATP pocket. Mg(2+)-binding residues include Glu288 and Asn290.

It belongs to the prokaryotic GSH synthase family. It depends on Mg(2+) as a cofactor. Requires Mn(2+) as cofactor.

The enzyme catalyses gamma-L-glutamyl-L-cysteine + glycine + ATP = glutathione + ADP + phosphate + H(+). Its pathway is sulfur metabolism; glutathione biosynthesis; glutathione from L-cysteine and L-glutamate: step 2/2. This Synechococcus elongatus (strain ATCC 33912 / PCC 7942 / FACHB-805) (Anacystis nidulans R2) protein is Glutathione synthetase.